A 705-amino-acid polypeptide reads, in one-letter code: Putative membrane protein SCO6666 (705 aa).

13 helical membrane-spanning segments follow: residues 16–36 (VMLL…GVFG), 144–164 (LHGI…PLLG), 177–197 (NAEL…FGGL), 201–221 (GLPL…LFGF), 232–252 (IQVT…LMLV), 280–300 (LFSG…PSTF), 306–326 (LAVA…LPAL), 360–380 (VAVL…VTGM), 504–524 (ALTV…SVLL), 528–548 (TVAT…WVFQ), 561–581 (LGAL…GLAM), 615–635 (VVTC…TGGF), and 636–656 (SPIL…ATVV).

It belongs to the resistance-nodulation-cell division (RND) (TC 2.A.6) family. MmpL subfamily.

It localises to the cell membrane. The sequence is that of Putative membrane protein SCO6666 from Streptomyces coelicolor (strain ATCC BAA-471 / A3(2) / M145).